Reading from the N-terminus, the 208-residue chain is Uracil phosphoribosyltransferase (208 aa).

5-phospho-alpha-D-ribose 1-diphosphate contacts are provided by residues Arg78, Arg103, and 130–138 (DPMLATGGS). Uracil contacts are provided by residues Ile193 and 198 to 200 (GDA). Position 199 (Asp199) interacts with 5-phospho-alpha-D-ribose 1-diphosphate.

This sequence belongs to the UPRTase family. Requires Mg(2+) as cofactor.

The enzyme catalyses UMP + diphosphate = 5-phospho-alpha-D-ribose 1-diphosphate + uracil. The protein operates within pyrimidine metabolism; UMP biosynthesis via salvage pathway; UMP from uracil: step 1/1. Its activity is regulated as follows. Allosterically activated by GTP. Functionally, catalyzes the conversion of uracil and 5-phospho-alpha-D-ribose 1-diphosphate (PRPP) to UMP and diphosphate. The chain is Uracil phosphoribosyltransferase from Proteus mirabilis (strain HI4320).